A 242-amino-acid chain; its full sequence is MSIQLNGINCFYGAHQALFDITLDCPQGETLVLLGPSGAGKSSLLRVLNLLEMPRSGTLNIAGNHFDFTKTPSDKAIRDLRRNVGMVFQQYNLWPHLTVQQNLIEAPCRVLGLSKDQALARAEKLLERLRLKPYSDRYPLHLSGGQQQRVAIARALMMEPQVLLFDEPTAALDPEITAQIVSIIRELAETNITQVIVTHEVEVARKTASRVVYMENGHIVEQGDASCFTEPQTEAFKNYLSH.

The 239-residue stretch at 3 to 241 folds into the ABC transporter domain; it reads IQLNGINCFY…QTEAFKNYLS (239 aa). 35–42 lines the ATP pocket; that stretch reads GPSGAGKS.

This sequence belongs to the ABC transporter superfamily. The complex is composed of two ATP-binding proteins (ArtP), two transmembrane proteins (ArtM and ArtQ) and two solute-binding proteins (ArtJ and ArtI).

The protein resides in the cell inner membrane. The enzyme catalyses a polar amino acid(out) + ATP + H2O = a polar amino acid(in) + ADP + phosphate + H(+). The catalysed reaction is L-arginine(out) + ATP + H2O = L-arginine(in) + ADP + phosphate + H(+). In terms of biological role, part of the ABC transporter complex ArtPIQMJ involved in arginine transport. Probably responsible for energy coupling to the transport system. This is Arginine transport ATP-binding protein ArtP (artP) from Escherichia coli O157:H7.